Consider the following 148-residue polypeptide: Nucleoside diphosphate kinase (148 aa).

The ATP site is built by Lys-10, Phe-58, Arg-86, Thr-92, Arg-103, and Asn-113. The active-site Pros-phosphohistidine intermediate is the His-116.

Belongs to the NDK family. Mg(2+) is required as a cofactor.

It localises to the cytoplasm. It catalyses the reaction a 2'-deoxyribonucleoside 5'-diphosphate + ATP = a 2'-deoxyribonucleoside 5'-triphosphate + ADP. It carries out the reaction a ribonucleoside 5'-diphosphate + ATP = a ribonucleoside 5'-triphosphate + ADP. In terms of biological role, major role in the synthesis of nucleoside triphosphates other than ATP. The ATP gamma phosphate is transferred to the NDP beta phosphate via a ping-pong mechanism, using a phosphorylated active-site intermediate. This is Nucleoside diphosphate kinase from Thermoplasma acidophilum (strain ATCC 25905 / DSM 1728 / JCM 9062 / NBRC 15155 / AMRC-C165).